Reading from the N-terminus, the 443-residue chain is Probable glycine dehydrogenase (decarboxylating) subunit 1 (443 aa).

Belongs to the GcvP family. N-terminal subunit subfamily. The glycine cleavage system is composed of four proteins: P, T, L and H. In this organism, the P 'protein' is a heterodimer of two subunits.

The catalysed reaction is N(6)-[(R)-lipoyl]-L-lysyl-[glycine-cleavage complex H protein] + glycine + H(+) = N(6)-[(R)-S(8)-aminomethyldihydrolipoyl]-L-lysyl-[glycine-cleavage complex H protein] + CO2. Functionally, the glycine cleavage system catalyzes the degradation of glycine. The P protein binds the alpha-amino group of glycine through its pyridoxal phosphate cofactor; CO(2) is released and the remaining methylamine moiety is then transferred to the lipoamide cofactor of the H protein. This is Probable glycine dehydrogenase (decarboxylating) subunit 1 from Desulfovibrio desulfuricans (strain ATCC 27774 / DSM 6949 / MB).